A 488-amino-acid polypeptide reads, in one-letter code: LPTEDDMGNSEVGHNALGAGRIFAQGAKLVDSALETGKLYEGEGFKYIKESFPTNTLHLIGLLSDGGVHSRLDQLLLLVKGASERGAKRIRVHILTDGRDVLDGSSVGFAETLENYLAQLREKGVDAQIASGGGRMYVTMDRYENDWGVVKRGWDAQVLGEAPHKFKNAVEAIKTLRQEPNTSDQYLPPFVIVDENGKPVGPIVDGDAVVTFNFRADRMVMIAKALEYADFDKFDRVRFPKIRYAGMLQYDGELKLPSKYLVEPPEIDRTSGEYLTYNGVRTFACSETVKFGHVTFFWNGNRSGYFNPQMEEYVEIPSDSGITFNVQPKMKAVEIAEKGRGAILSKKFEQVRVNLPNSDMVGHTSSIEATVVACKAADEAVKIIIDAIEQVGGIYVVTADHGNAEDMVKRNKKGQPLLDKNGNIQILTSHTLQPVPIAIGGPGLAPGVQFRKDVPNGGLANVAATVMNLHGFEAPADYETTLIEVVDN.

The Phosphoserine intermediate role is filled by Ser-10. Ser-10 contacts Mn(2+). Substrate-binding positions include His-69, 99–100 (RD), Arg-135, Arg-142, 215–218 (RADR), and Lys-290. 5 residues coordinate Mn(2+): Asp-359, His-363, Asp-400, His-401, and His-430.

This sequence belongs to the BPG-independent phosphoglycerate mutase family. As to quaternary structure, monomer. Requires Mn(2+) as cofactor.

The protein localises to the cytoplasm. The enzyme catalyses (2R)-2-phosphoglycerate = (2R)-3-phosphoglycerate. The protein operates within carbohydrate degradation; glycolysis; pyruvate from D-glyceraldehyde 3-phosphate: step 3/5. In terms of biological role, catalyzes the interconversion of 2-phosphoglycerate and 3-phosphoglycerate. In Prunus dulcis (Almond), this protein is 2,3-bisphosphoglycerate-independent phosphoglycerate mutase.